A 190-amino-acid polypeptide reads, in one-letter code: Xanthine phosphoribosyltransferase (190 aa).

Xanthine contacts are provided by Leu20 and Asn27. Residue 128–132 (ANGKA) coordinates 5-phospho-alpha-D-ribose 1-diphosphate. Lys156 is a binding site for xanthine.

This sequence belongs to the purine/pyrimidine phosphoribosyltransferase family. Xpt subfamily. Homodimer.

It localises to the cytoplasm. It catalyses the reaction XMP + diphosphate = xanthine + 5-phospho-alpha-D-ribose 1-diphosphate. It participates in purine metabolism; XMP biosynthesis via salvage pathway; XMP from xanthine: step 1/1. Functionally, converts the preformed base xanthine, a product of nucleic acid breakdown, to xanthosine 5'-monophosphate (XMP), so it can be reused for RNA or DNA synthesis. This is Xanthine phosphoribosyltransferase from Pseudomonas fluorescens (strain ATCC BAA-477 / NRRL B-23932 / Pf-5).